Consider the following 258-residue polypeptide: Isoprenyl transferase (258 aa).

Asp38 is an active-site residue. Mg(2+) is bound at residue Asp38. Residues 39–42 (GNGR), Trp43, Arg51, His55, and 83–85 (STE) each bind substrate. Asn86 functions as the Proton acceptor in the catalytic mechanism. Residues Trp87, Arg89, Arg206, and 212-214 (RIS) each bind substrate. Glu225 serves as a coordination point for Mg(2+).

The protein belongs to the UPP synthase family. In terms of assembly, homodimer. It depends on Mg(2+) as a cofactor.

Catalyzes the condensation of isopentenyl diphosphate (IPP) with allylic pyrophosphates generating different type of terpenoids. The protein is Isoprenyl transferase of Bacillus cereus (strain ATCC 10987 / NRS 248).